Here is a 388-residue protein sequence, read N- to C-terminus: L-cysteine desulfidase (388 aa).

Catalysis depends on cysteine 25, which acts as the Proton acceptor. Cysteine 282, cysteine 322, and cysteine 329 together coordinate [4Fe-4S] cluster.

It belongs to the L-cysteine desulfidase family. As to quaternary structure, homotrimer. It depends on [4Fe-4S] cluster as a cofactor.

The enzyme catalyses L-cysteine + H2O = hydrogen sulfide + pyruvate + NH4(+) + H(+). In terms of biological role, catalyzes the cleavage of L-cysteine to form 2-aminoprop-2-enoate and sulfide. The former then spontaneously hydrolyzes to pyruvate and NH(3). May be responsible for the production of sulfide required for the biosynthesis of iron-sulfur centers in this archaea. Is very specific for L-cysteine, with no activity being detected with D-cysteine, L-homocysteine, 3-mercaptopropionate (cysteine without the amino group), cysteamine (cysteine without the carboxylate), or mercaptolactate (the hydroxyl analog of cysteine). The polypeptide is L-cysteine desulfidase (Methanocaldococcus jannaschii (strain ATCC 43067 / DSM 2661 / JAL-1 / JCM 10045 / NBRC 100440) (Methanococcus jannaschii)).